A 285-amino-acid chain; its full sequence is N(G),N(G)-dimethylarginine dimethylaminohydrolase 1 (285 aa).

N-acetylalanine is present on alanine 2. 6 residues coordinate substrate: leucine 30, aspartate 73, glutamate 78, aspartate 79, arginine 98, and arginine 145. Histidine 173 functions as the Proton donor in the catalytic mechanism. An S-nitrosocysteine modification is found at cysteine 222. Valine 268 serves as a coordination point for substrate. Cysteine 274 is subject to S-nitrosocysteine. Cysteine 274 (nucleophile) is an active-site residue. Cysteine 274 lines the Zn(2+) pocket.

In terms of assembly, monomer. As to expression, widely distributed, highest concentrations found in brain, brain cortex and kidney (at protein level).

The catalysed reaction is N(omega),N(omega)-dimethyl-L-arginine + H2O = dimethylamine + L-citrulline. It carries out the reaction N(omega)-methyl-L-arginine + H2O = L-citrulline + methylamine. Its activity is regulated as follows. Copurifies with a tightly bound zinc ion. Activated by release of zinc. His and other agents that promote the release of bound zinc ions activate the enzyme (in vitro). Inhibited by S-nitrosylation. Zinc protects the protein against S-nitrosylation. Functionally, hydrolyzes N(G),N(G)-dimethyl-L-arginine (ADMA) and N(G)-monomethyl-L-arginine (MMA) which act as inhibitors of NOS. Has therefore a role in the regulation of nitric oxide generation. This is N(G),N(G)-dimethylarginine dimethylaminohydrolase 1 (DDAH1) from Bos taurus (Bovine).